Here is a 524-residue protein sequence, read N- to C-terminus: Chromosomal replication initiator protein DnaA (524 aa).

Positions 1-72 (MNDFWQHCSA…DLARDFWNAP (72 aa)) are domain I, interacts with DnaA modulators. The domain II stretch occupies residues 72–187 (PIEVQFVLDP…GEADSMYERS (116 aa)). Residues 188 to 404 (KLNPVLTFDN…GALRKILAYS (217 aa)) form a domain III, AAA+ region region. 4 residues coordinate ATP: G232, G234, K235, and T236. Residues 405 to 524 (KFHGREISIE…LHVLEQTLKG (120 aa)) are domain IV, binds dsDNA.

It belongs to the DnaA family. Oligomerizes as a right-handed, spiral filament on DNA at oriC.

It localises to the cytoplasm. Plays an essential role in the initiation and regulation of chromosomal replication. ATP-DnaA binds to the origin of replication (oriC) to initiate formation of the DNA replication initiation complex once per cell cycle. Binds the DnaA box (a 9 base pair repeat at the origin) and separates the double-stranded (ds)DNA. Forms a right-handed helical filament on oriC DNA; dsDNA binds to the exterior of the filament while single-stranded (ss)DNA is stabiized in the filament's interior. The ATP-DnaA-oriC complex binds and stabilizes one strand of the AT-rich DNA unwinding element (DUE), permitting loading of DNA polymerase. After initiation quickly degrades to an ADP-DnaA complex that is not apt for DNA replication. Binds acidic phospholipids. The protein is Chromosomal replication initiator protein DnaA of Burkholderia multivorans (strain ATCC 17616 / 249).